The sequence spans 104 residues: Ig kappa chain b5 variant C region (104 aa).

The region spanning proline 5–serine 100 is the Ig-like domain. Cysteine 26 and cysteine 85 are joined by a disulfide.

This chain is Ig kappa chain b5 variant C region, found in Oryctolagus cuniculus (Rabbit).